Reading from the N-terminus, the 152-residue chain is UPF0756 membrane protein Helmi_09930 (152 aa).

The next 5 membrane-spanning stretches (helical) occupy residues 6–26, 52–72, 75–95, 111–131, and 132–152; these read VLLILILLLGVIARSPMTALA, TGLIMLTLAMLAPFATGKVGL, VLLSFASLPGIIAVIGGVLAT, IIVGMIVGSLLGIVLFGGIPV, and GPLMAGGLTALILQIYGWLSK.

The protein belongs to the UPF0756 family.

It is found in the cell membrane. In Heliobacterium modesticaldum (strain ATCC 51547 / Ice1), this protein is UPF0756 membrane protein Helmi_09930.